Reading from the N-terminus, the 130-residue chain is Acyl carrier protein 2, chloroplastic (130 aa).

A chloroplast-targeting transit peptide spans 1–48; it reads MASITGSSVSFKCAPLQSSFNSKNYALKSSVTFWRRTPVMPRGLSVSC. In terms of domain architecture, Carrier spans 52-127; it reads PEMVTKVSDI…EAADMIEALQ (76 aa). Ser87 carries the O-(pantetheine 4'-phosphoryl)serine modification.

The protein belongs to the acyl carrier protein (ACP) family. In terms of processing, 4'-phosphopantetheine is transferred from CoA to a specific serine of apo-ACP by acpS. This modification is essential for activity because fatty acids are bound in thioester linkage to the sulfhydryl of the prosthetic group. As to expression, roots, leaves and seeds.

It localises to the plastid. It is found in the chloroplast. It functions in the pathway lipid metabolism; fatty acid biosynthesis. Its function is as follows. Carrier of the growing fatty acid chain in fatty acid biosynthesis. This is Acyl carrier protein 2, chloroplastic (ACL1.2) from Spinacia oleracea (Spinach).